We begin with the raw amino-acid sequence, 242 residues long: Caffeoyl-CoA O-methyltransferase 2 (242 aa).

Lys16 contacts substrate. S-adenosyl-L-methionine-binding positions include Thr58, Glu80, 82–83, Ser88, Asp106, and Ala135; that span reads GV. Asp158 is a binding site for substrate. An a divalent metal cation-binding site is contributed by Asp158. Position 160 (Asp160) interacts with S-adenosyl-L-methionine. Residues Asp184 and Asn185 each contribute to the a divalent metal cation site. Residue Asn189 coordinates substrate.

It belongs to the class I-like SAM-binding methyltransferase superfamily. Cation-dependent O-methyltransferase family. CCoAMT subfamily. A divalent metal cation serves as cofactor. Mostly expressed in petal limbs and tubes, and, at low levels, in stems, roots and leaves.

The protein resides in the cytoplasm. The protein localises to the cytosol. The enzyme catalyses (E)-caffeoyl-CoA + S-adenosyl-L-methionine = (E)-feruloyl-CoA + S-adenosyl-L-homocysteine + H(+). It carries out the reaction (E)-5-hydroxyferuloyl-CoA + S-adenosyl-L-methionine = (E)-sinapoyl-CoA + S-adenosyl-L-homocysteine + H(+). The protein operates within aromatic compound metabolism; phenylpropanoid biosynthesis. Involved in the production of floral volatile phenylpropanoids in flowers of fragrant cultivars (e.g. cv. Mitchell and cv. V26) from cinnamic acid, a common precursor with the anthocyanin biosynthesis pathway involved in flower pigmentation. Methylates caffeoyl-CoA to feruloyl-CoA, also able to methylate 5-hydroxyferuloyl-CoA. The protein is Caffeoyl-CoA O-methyltransferase 2 of Petunia hybrida (Petunia).